The chain runs to 148 residues: Arginine repressor (148 aa).

The protein belongs to the ArgR family.

The protein resides in the cytoplasm. It participates in amino-acid biosynthesis; L-arginine biosynthesis [regulation]. In terms of biological role, regulates arginine biosynthesis genes. The chain is Arginine repressor from Pelodictyon phaeoclathratiforme (strain DSM 5477 / BU-1).